The primary structure comprises 162 residues: Corticoliberin (162 aa).

The first 24 residues, 1-24, serve as a signal peptide directing secretion; that stretch reads MKFQLWVSTGILLVSLLPCHECRA. A propeptide spanning residues 25–119 is cleaved from the precursor; sequence FIKSPASSPG…QEDPTEKAKR (95 aa). Residues 91–122 are disordered; the sequence is SQPGMRAASLDGADSPYSAQEDPTEKAKRAEE. The span at 113 to 122 shows a compositional bias: basic and acidic residues; it reads PTEKAKRAEE. Ile160 is modified (isoleucine amide).

It belongs to the sauvagine/corticotropin-releasing factor/urotensin I family.

It localises to the secreted. Its function is as follows. This hormone from hypothalamus regulates the release of corticotropin from pituitary gland. The polypeptide is Corticoliberin (crh) (Xenopus laevis (African clawed frog)).